The primary structure comprises 145 residues: Alpha-amylase/trypsin inhibitor CM1 (145 aa).

The signal sequence occupies residues 1–25 (MASKSSISPLLLATVLVSVFAAATA).

It belongs to the protease inhibitor I6 (cereal trypsin/alpha-amylase inhibitor) family. As to quaternary structure, subunit of the tetrameric inhibitor. In terms of tissue distribution, endosperm.

It localises to the secreted. Its function is as follows. Alpha-amylase/trypsin inhibitor. It could be involved in insect defense mechanisms. The sequence is that of Alpha-amylase/trypsin inhibitor CM1 from Triticum aestivum (Wheat).